The following is a 232-amino-acid chain: Ureidoacrylate amidohydrolase RutB (232 aa).

Asp26 (proton acceptor) is an active-site residue. The active site involves Lys135. The active-site Nucleophile is the Cys168.

Belongs to the isochorismatase family. RutB subfamily.

The enzyme catalyses (Z)-3-ureidoacrylate + H2O + H(+) = (Z)-3-aminoacrylate + NH4(+) + CO2. It catalyses the reaction (Z)-3-ureidoacrylate + H2O = (Z)-3-aminoacrylate + carbamate + H(+). It carries out the reaction (Z)-2-methylureidoacrylate + H2O + H(+) = (Z)-2-methylaminoacrylate + NH4(+) + CO2. Functionally, hydrolyzes ureidoacrylate to form aminoacrylate and carbamate. The carbamate hydrolyzes spontaneously, thereby releasing one of the nitrogen atoms of the pyrimidine ring as ammonia and one of its carbon atoms as CO2. The polypeptide is Ureidoacrylate amidohydrolase RutB (Cronobacter sakazakii (strain ATCC BAA-894) (Enterobacter sakazakii)).